The primary structure comprises 237 residues: UPF0758 protein Aave_3773 (237 aa).

The region spanning 115–237 (LFHSPRAVRD…SLSMAEEGLI (123 aa)) is the MPN domain. Positions 186, 188, and 199 each coordinate Zn(2+). The short motif at 186–199 (HNHPSGQVQPSRAD) is the JAMM motif element.

The protein belongs to the UPF0758 family.

The sequence is that of UPF0758 protein Aave_3773 from Paracidovorax citrulli (strain AAC00-1) (Acidovorax citrulli).